The sequence spans 347 residues: Probable dual-specificity RNA methyltransferase RlmN (347 aa).

The active-site Proton acceptor is glutamate 93. In terms of domain architecture, Radical SAM core spans 100–323; that stretch reads KAKRKTACVS…KKAGLNISTR (224 aa). Cysteine 107 and cysteine 334 are oxidised to a cystine. Residues cysteine 114, cysteine 118, and cysteine 121 each contribute to the [4Fe-4S] cluster site. S-adenosyl-L-methionine contacts are provided by residues 160 to 161, serine 192, 215 to 217, and asparagine 291; these read GE and SLT. The S-methylcysteine intermediate role is filled by cysteine 334.

Belongs to the radical SAM superfamily. RlmN family. The cofactor is [4Fe-4S] cluster.

Its subcellular location is the cytoplasm. The catalysed reaction is adenosine(2503) in 23S rRNA + 2 reduced [2Fe-2S]-[ferredoxin] + 2 S-adenosyl-L-methionine = 2-methyladenosine(2503) in 23S rRNA + 5'-deoxyadenosine + L-methionine + 2 oxidized [2Fe-2S]-[ferredoxin] + S-adenosyl-L-homocysteine. It catalyses the reaction adenosine(37) in tRNA + 2 reduced [2Fe-2S]-[ferredoxin] + 2 S-adenosyl-L-methionine = 2-methyladenosine(37) in tRNA + 5'-deoxyadenosine + L-methionine + 2 oxidized [2Fe-2S]-[ferredoxin] + S-adenosyl-L-homocysteine. Functionally, specifically methylates position 2 of adenine 2503 in 23S rRNA and position 2 of adenine 37 in tRNAs. The sequence is that of Probable dual-specificity RNA methyltransferase RlmN from Treponema denticola (strain ATCC 35405 / DSM 14222 / CIP 103919 / JCM 8153 / KCTC 15104).